The primary structure comprises 201 residues: ATP-dependent Clp protease proteolytic subunit 2 (201 aa).

Ser-98 (nucleophile) is an active-site residue. The active site involves His-123.

It belongs to the peptidase S14 family. Fourteen ClpP subunits assemble into 2 heptameric rings which stack back to back to give a disk-like structure with a central cavity, resembling the structure of eukaryotic proteasomes.

The protein localises to the cytoplasm. It catalyses the reaction Hydrolysis of proteins to small peptides in the presence of ATP and magnesium. alpha-casein is the usual test substrate. In the absence of ATP, only oligopeptides shorter than five residues are hydrolyzed (such as succinyl-Leu-Tyr-|-NHMec, and Leu-Tyr-Leu-|-Tyr-Trp, in which cleavage of the -Tyr-|-Leu- and -Tyr-|-Trp bonds also occurs).. Cleaves peptides in various proteins in a process that requires ATP hydrolysis. Has a chymotrypsin-like activity. Plays a major role in the degradation of misfolded proteins. The protein is ATP-dependent Clp protease proteolytic subunit 2 of Rhizobium johnstonii (strain DSM 114642 / LMG 32736 / 3841) (Rhizobium leguminosarum bv. viciae).